Reading from the N-terminus, the 239-residue chain is Probable transcriptional regulatory protein MG332 (239 aa).

This sequence belongs to the TACO1 family.

It is found in the cytoplasm. This chain is Probable transcriptional regulatory protein MG332, found in Mycoplasma genitalium (strain ATCC 33530 / DSM 19775 / NCTC 10195 / G37) (Mycoplasmoides genitalium).